Here is a 444-residue protein sequence, read N- to C-terminus: U-box domain-containing protein 31 (444 aa).

Residues 59–133 (EIPSVFICPI…YTWFSQKYVL (75 aa)) form the U-box domain. 2 ARM repeats span residues 301–340 (KQVR…SLCL) and 343–382 (EGRI…SVCK).

It catalyses the reaction S-ubiquitinyl-[E2 ubiquitin-conjugating enzyme]-L-cysteine + [acceptor protein]-L-lysine = [E2 ubiquitin-conjugating enzyme]-L-cysteine + N(6)-ubiquitinyl-[acceptor protein]-L-lysine.. It participates in protein modification; protein ubiquitination. In terms of biological role, functions as an E3 ubiquitin ligase. This is U-box domain-containing protein 31 (PUB31) from Arabidopsis thaliana (Mouse-ear cress).